Consider the following 44-residue polypeptide: Large ribosomal subunit protein bL34 (44 aa).

The protein belongs to the bacterial ribosomal protein bL34 family.

This is Large ribosomal subunit protein bL34 from Buchnera aphidicola subsp. Cinara cedri (strain Cc).